The chain runs to 129 residues: uncharacterized protein (129 aa).

The interval 44-63 (PYRAADRSNDQDNDRSGGNV) is disordered. Residues 46 to 58 (RAADRSNDQDNDR) show a composition bias toward basic and acidic residues. The next 2 helical transmembrane spans lie at 78–98 (IISL…VGYI) and 109–129 (AWAM…IPFF).

It is found in the cell membrane. This is an uncharacterized protein from Bacillus subtilis (strain 168).